The following is a 450-amino-acid chain: Tubulin alpha chain (450 aa).

8 residues coordinate GTP: glutamine 11, glutamate 71, serine 140, glycine 144, threonine 145, threonine 179, asparagine 206, and asparagine 228. Glutamate 71 contributes to the Mg(2+) binding site. The active site involves glutamate 254.

The protein belongs to the tubulin family. In terms of assembly, dimer of alpha and beta chains. A typical microtubule is a hollow water-filled tube with an outer diameter of 25 nm and an inner diameter of 15 nM. Alpha-beta heterodimers associate head-to-tail to form protofilaments running lengthwise along the microtubule wall with the beta-tubulin subunit facing the microtubule plus end conferring a structural polarity. Microtubules usually have 13 protofilaments but different protofilament numbers can be found in some organisms and specialized cells. Mg(2+) is required as a cofactor.

It localises to the cytoplasm. The protein localises to the cytoskeleton. The catalysed reaction is GTP + H2O = GDP + phosphate + H(+). In terms of biological role, tubulin is the major constituent of microtubules, a cylinder consisting of laterally associated linear protofilaments composed of alpha- and beta-tubulin heterodimers. Microtubules grow by the addition of GTP-tubulin dimers to the microtubule end, where a stabilizing cap forms. Below the cap, tubulin dimers are in GDP-bound state, owing to GTPase activity of alpha-tubulin. This is Tubulin alpha chain from Zymoseptoria tritici (Speckled leaf blotch fungus).